A 210-amino-acid chain; its full sequence is MAASVEQREDTIQVQGQALFFREARPGSGQAHFSVLLLHGIRFSSETWQNLGTLHQLAQAGYRAVAIDLPGLGRSKEAAAPAPIGELAPGSFLAAVVDALELGPPVVISPSLSGMYSLPFLTAPGSQLLGYVPVAPICTDKINAANYASVKTPALIVYGDQDPMGQTSFEHLKQLPNHRVLIMKGAGHPCYLDKPEEWHTGLLDFLQGLQ.

Ala2 is subject to N-acetylalanine. Ser91 carries the phosphoserine modification. Catalysis depends on charge relay system residues Ser111, Asp162, and His188.

This sequence belongs to the AB hydrolase superfamily. ABHD14 family. As to quaternary structure, may interact with TAF1.

Its subcellular location is the cytoplasm. It is found in the nucleus. The enzyme catalyses L-lysyl-[protein] + acetyl-CoA = N(6)-acetyl-L-lysyl-[protein] + CoA + H(+). In terms of biological role, acts as an atypical protein-lysine deacetylase in vitro. Catalyzes the deacetylation of lysine residues using CoA as substrate, generating acetyl-CoA and the free amine of protein-lysine residues. Additional experiments are however required to confirm the protein-lysine deacetylase activity in vivo. Has hydrolase activity towards various surrogate p-nitrophenyl (pNp) substrates, such as pNp-butyrate, pNp-acetate and pNp-octanoate in vitro, with a strong preference for pNp-acetate. May activate transcription. The sequence is that of Putative protein-lysine deacylase ABHD14B from Pongo abelii (Sumatran orangutan).